The sequence spans 370 residues: Probable butyrate kinase (370 aa).

The protein belongs to the acetokinase family.

The protein resides in the cytoplasm. The catalysed reaction is butanoate + ATP = butanoyl phosphate + ADP. The chain is Probable butyrate kinase from Elusimicrobium minutum (strain Pei191).